The sequence spans 148 residues: Large ribosomal subunit protein bL9 (148 aa).

This sequence belongs to the bacterial ribosomal protein bL9 family.

Functionally, binds to the 23S rRNA. This Oceanobacillus iheyensis (strain DSM 14371 / CIP 107618 / JCM 11309 / KCTC 3954 / HTE831) protein is Large ribosomal subunit protein bL9.